The sequence spans 758 residues: MPENFGAMRQDGLVSTSESDSPAPAATPAATLRAEYSKLVEDIRHYRFAYYNEAESLVSDAEFDVLFRRLEEIEALHPELISNDSPTQEVGGEVSAAFTPVQHTSQIYSLEDVFSIEELQSWIIKAQANAEKLAGSIVAERPLRWLTELKIDGLAVNLLYRNGQLVRAATRGDGITGEDITHNVLTIQEIPRQLRGENLPEEVEIRGEVFIASKDFLALNEQIVGTGRAPFANPRNAAAGSLRQKDPADTAKRPLSMLVHGIGSRIGLDVASQSESYALLKAWGLPTSPYFKVLTGYQEVLDYINHYGEHRHDLLHEIDGIVIKIDDFASQNALGFTSRVPRWAVAYKYPPEEVHTKLLDILVNVGRTGRVTPFGVMEPVKVAGSTVEMATLHNQDVVKAKGVLIGDTVVLRKAGDVIPEIVGPVLALRDGREREFVMPTECPSCGTALAPAKEGDVDIRCPNAKSCPDQLRERVFHLAGRGAFDIEALGWEAAIALTQPAEPELAPVRNEAQIFNLVAEDLALVKIKREKKVKGVLSGVHELVPYFYSKGTEEKPSEPTSNTVKLFIELEKAKAQPLWRVLVALSIRHVGPTASRALATAFGSMAAIRAASEPELAEVDGVGPTIAAALIEWFAEDWHREIIDAWAADGVRMADERDESVRRTLAGLTIVVTGSLEKFNRDQAKEAIINRGGKSAGSVSKNTDYVVAGENAGTKLDKAEKLGVTVLDEAGFETLLAHGPDHSAEAEENESEGSTTND.

The interval 1–28 (MPENFGAMRQDGLVSTSESDSPAPAATP) is disordered. Residues 60 to 64 (DAEFD), 109 to 110 (SL), and Glu-148 contribute to the NAD(+) site. Lys-150 acts as the N6-AMP-lysine intermediate in catalysis. Arg-171, Glu-208, Lys-324, and Lys-348 together coordinate NAD(+). Residues Cys-442, Cys-445, Cys-461, and Cys-467 each contribute to the Zn(2+) site. Residues 660 to 749 (SVRRTLAGLT…PDHSAEAEEN (90 aa)) form the BRCT domain. The tract at residues 735 to 758 (LLAHGPDHSAEAEENESEGSTTND) is disordered.

The protein belongs to the NAD-dependent DNA ligase family. LigA subfamily. Mg(2+) is required as a cofactor. Mn(2+) serves as cofactor.

It carries out the reaction NAD(+) + (deoxyribonucleotide)n-3'-hydroxyl + 5'-phospho-(deoxyribonucleotide)m = (deoxyribonucleotide)n+m + AMP + beta-nicotinamide D-nucleotide.. In terms of biological role, DNA ligase that catalyzes the formation of phosphodiester linkages between 5'-phosphoryl and 3'-hydroxyl groups in double-stranded DNA using NAD as a coenzyme and as the energy source for the reaction. It is essential for DNA replication and repair of damaged DNA. This is DNA ligase from Renibacterium salmoninarum (strain ATCC 33209 / DSM 20767 / JCM 11484 / NBRC 15589 / NCIMB 2235).